The following is a 358-amino-acid chain: DNA integrity scanning protein DisA (358 aa).

Residues 6-144 (RPTLREAVAR…RGERHVLTDS (139 aa)) enclose the DAC domain. Residues glycine 73, leucine 91, and 104 to 108 (TRHRS) contribute to the ATP site.

It belongs to the DisA family. In terms of assembly, homooctamer. The cofactor is Mg(2+).

The enzyme catalyses 2 ATP = 3',3'-c-di-AMP + 2 diphosphate. Participates in a DNA-damage check-point. DisA forms globular foci that rapidly scan along the chromosomes searching for lesions. In terms of biological role, also has diadenylate cyclase activity, catalyzing the condensation of 2 ATP molecules into cyclic di-AMP (c-di-AMP). c-di-AMP likely acts as a signaling molecule that may couple DNA integrity with a cellular process. This Mycobacterium tuberculosis (strain ATCC 25177 / H37Ra) protein is DNA integrity scanning protein DisA.